We begin with the raw amino-acid sequence, 242 residues long: MKILIPTAKELNLTAPSAIPNPPLAQTQAVLDELATMSVAGLASFYKISPERAEIELQAIQALREGTAQHAPALYLFDGLMYRHIKRQDYTKEESQYIEKYLAITSALYGVIPALEPIAPHRLDFMMPLKLDGKSLKAFWKEAYDQALAEDEVIFSLLSSEFETVFSKKIRQRMIGFKFLEDRGDKLKVHSTISKKARGEFLTALITNQVTEVEQMKKLNFAGFTYRPDLSSEQEMVYVKEV.

It belongs to the UPF0246 family.

The polypeptide is UPF0246 protein SSA_1395 (Streptococcus sanguinis (strain SK36)).